Here is a 378-residue protein sequence, read N- to C-terminus: Spermatogenic leucine zipper protein 1 (378 aa).

Residues 1 to 31 are disordered; sequence MSDTDNSAEMPARCPSPNPAPGAKQEPPNSG. Serine 106 is subject to Phosphoserine. The segment at 116–122 is interaction with PPP1CC isoform gamma-2; that stretch reads KNKIRFK. The tract at residues 116 to 127 is helix-loop-helix motif; sequence KNKIRFKDDLFI. A basic motif region spans residues 128-193; sequence HFDPEREQNT…HLRGEYRKLR (66 aa). The stretch at 182–233 forms a coiled coil; the sequence is SLHLRGEYRKLRNNMEQLLQEADHWSKQHNELSELMRSYQECQNETQETTDK. At serine 207 the chain carries Phosphoserine. The segment at 252–273 is leucine-zipper; the sequence is LEEQVKKLSHDTHALHLIAALL.

As to quaternary structure, interacts with PPP1CC isoform gamma-2. This interaction can prevent SPZ1 binding to the E-box and inhibits PPP1CC activity. Post-translationally, phosphorylated by MAPK1/ERK2 and MAPK3/ERK1. As to expression, expressed specifically in the testis and epidydimis. In the testis expressed in both germ cells and somatic cells (Sertoli and Leydig cells). Expressed in several tumor cell lines.

The protein resides in the cytoplasm. The protein localises to the nucleus. In terms of biological role, transcription factor that binds to the DNA sequence 5'-CANNTG-3'(E box) and the G-box motif. Directly binds to a guanine-rich region of the PCNA promoter and up-regulates its expression which in turn induces cell transformation and tumor formation. May play an important role in the regulation of cell proliferation and differentiation during spermatogenesis. This Mus musculus (Mouse) protein is Spermatogenic leucine zipper protein 1 (Spz1).